The chain runs to 217 residues: Cytidylate kinase (217 aa).

10-18 (GPAGAGKST) contributes to the ATP binding site.

The protein belongs to the cytidylate kinase family. Type 1 subfamily.

The protein resides in the cytoplasm. The catalysed reaction is CMP + ATP = CDP + ADP. It carries out the reaction dCMP + ATP = dCDP + ADP. This is Cytidylate kinase from Alkaliphilus oremlandii (strain OhILAs) (Clostridium oremlandii (strain OhILAs)).